A 308-amino-acid polypeptide reads, in one-letter code: Ribosomal RNA large subunit methyltransferase F (308 aa).

The protein belongs to the methyltransferase superfamily. METTL16/RlmF family.

It localises to the cytoplasm. The enzyme catalyses adenosine(1618) in 23S rRNA + S-adenosyl-L-methionine = N(6)-methyladenosine(1618) in 23S rRNA + S-adenosyl-L-homocysteine + H(+). Functionally, specifically methylates the adenine in position 1618 of 23S rRNA. This Escherichia coli (strain SMS-3-5 / SECEC) protein is Ribosomal RNA large subunit methyltransferase F.